We begin with the raw amino-acid sequence, 248 residues long: MKKDREPIDEDEMRITSTGRMTNYVNYGAKILGDEDKKSIKIKATGNAIGKAVTLAEIIKRRFKGLHQITRCGSTVITDQYVSGQDNSEHVVQEKTVSFIEILLSREQLDMKDAGYQPPLDEKYVKEMTPEEIVNSRPFRRGGFRPRFYRGFRGGRGGFLRRGGYRGFGDRVYEPRSSFRGGRGSGYGGNFGRGGYRSGGGMGGGFRGGFRGGFRGGRDGGYRGGNRGGSRSGFRGGRGGFRGGRALS.

Positions 217-248 are disordered; the sequence is GRDGGYRGGNRGGSRSGFRGGRGGFRGGRALS. Residues 222 to 248 are compositionally biased toward gly residues; that stretch reads YRGGNRGGSRSGFRGGRGGFRGGRALS.

This sequence belongs to the histone-like Alba family. In terms of assembly, may form homodimers. Identified in a TARE6-associated complex consisting of over 30 proteins and including ALBA1, ALBA2 and ALBA4; the complex binds to the non-coding subtelomeric repeat region TARE6.

It localises to the nucleus. It is found in the chromosome. The protein localises to the telomere. Its subcellular location is the cytoplasm. Functionally, possesses DNA- and RNA-binding activities. During the asexual blood stages binds to a sub-population of mature mRNAs and regulates the timing of their translation. Binds to DNA with relaxed sequence specificity. Associates with the subtelomeric TARE6 repeats. The polypeptide is DNA/RNA-binding protein ALBA1 (Plasmodium falciparum (isolate 3D7)).